The sequence spans 1414 residues: DNA-directed RNA polymerase subunit beta' (1414 aa).

Cys-70, Cys-72, Cys-85, and Cys-88 together coordinate Zn(2+). Positions 461, 463, and 465 each coordinate Mg(2+). Residues Cys-820, Cys-894, Cys-901, and Cys-904 each coordinate Zn(2+).

It belongs to the RNA polymerase beta' chain family. In terms of assembly, the RNAP catalytic core consists of 2 alpha, 1 beta, 1 beta' and 1 omega subunit. When a sigma factor is associated with the core the holoenzyme is formed, which can initiate transcription. The cofactor is Mg(2+). Requires Zn(2+) as cofactor.

The enzyme catalyses RNA(n) + a ribonucleoside 5'-triphosphate = RNA(n+1) + diphosphate. Its function is as follows. DNA-dependent RNA polymerase catalyzes the transcription of DNA into RNA using the four ribonucleoside triphosphates as substrates. This Cupriavidus taiwanensis (strain DSM 17343 / BCRC 17206 / CCUG 44338 / CIP 107171 / LMG 19424 / R1) (Ralstonia taiwanensis (strain LMG 19424)) protein is DNA-directed RNA polymerase subunit beta'.